The primary structure comprises 94 residues: MQIDEKLLSKLEKLSALQITKNRNETIVQLSEIVNFVEKLNELDLDSQEITVSTIKGGAPLRIDEIRNSNVIDEVLDCAPKKQEHFFVVPKIIE.

Belongs to the GatC family. In terms of assembly, heterotrimer of A, B and C subunits.

It carries out the reaction L-glutamyl-tRNA(Gln) + L-glutamine + ATP + H2O = L-glutaminyl-tRNA(Gln) + L-glutamate + ADP + phosphate + H(+). It catalyses the reaction L-aspartyl-tRNA(Asn) + L-glutamine + ATP + H2O = L-asparaginyl-tRNA(Asn) + L-glutamate + ADP + phosphate + 2 H(+). Its function is as follows. Allows the formation of correctly charged Asn-tRNA(Asn) or Gln-tRNA(Gln) through the transamidation of misacylated Asp-tRNA(Asn) or Glu-tRNA(Gln) in organisms which lack either or both of asparaginyl-tRNA or glutaminyl-tRNA synthetases. The reaction takes place in the presence of glutamine and ATP through an activated phospho-Asp-tRNA(Asn) or phospho-Glu-tRNA(Gln). This chain is Aspartyl/glutamyl-tRNA(Asn/Gln) amidotransferase subunit C, found in Campylobacter jejuni subsp. jejuni serotype O:6 (strain 81116 / NCTC 11828).